The primary structure comprises 238 residues: Major prion protein (238 aa).

The signal sequence occupies residues Met1–Cys15. Positions Lys16 to Ser215 are interaction with GRB2, ERI3 and SYN1. Residues Arg18–Ser93 are disordered. 4 tandem repeats follow at residues Pro44–Gln52, Pro53–Gln60, Pro61–Gln68, and Pro69–Gln76. Residues Pro44 to Gln83 are 4 X 8 AA tandem repeats of P-H-G-G-G-W-G-Q. The span at Gln45–Thr80 shows a compositional bias: gly residues. The Cu(2+) site is built by Gly47, Gly48, His54, Gly55, Gly56, His62, Gly63, Gly64, His70, Gly71, and Gly72. Residues Gln83 to Ser93 show a composition bias toward basic residues. Cys164 and Cys199 are joined by a disulfide. N-linked (GlcNAc...) asparagine glycans are attached at residues Asn166 and Asn182. Residue Ser215 is the site of GPI-anchor amidated serine attachment. A propeptide spans Ser216–Gly238 (removed in mature form).

This sequence belongs to the prion family. As to quaternary structure, monomer and homodimer. Has a tendency to aggregate into amyloid fibrils containing a cross-beta spine, formed by a steric zipper of superposed beta-strands. Soluble oligomers may represent an intermediate stage on the path to fibril formation. Copper binding may promote oligomerization. Interacts with GRB2, APP, ERI3/PRNPIP and SYN1. Mislocalized cytosolically exposed PrP interacts with MGRN1; this interaction alters MGRN1 subcellular location and causes lysosomal enlargement. Interacts with KIAA1191.

It localises to the cell membrane. Its subcellular location is the golgi apparatus. Functionally, its primary physiological function is unclear. Has cytoprotective activity against internal or environmental stresses. May play a role in neuronal development and synaptic plasticity. May be required for neuronal myelin sheath maintenance. May play a role in iron uptake and iron homeostasis. Soluble oligomers are toxic to cultured neuroblastoma cells and induce apoptosis (in vitro). Association with GPC1 (via its heparan sulfate chains) targets PRNP to lipid rafts. Also provides Cu(2+) or Zn(2+) for the ascorbate-mediated GPC1 deaminase degradation of its heparan sulfate side chains. The sequence is that of Major prion protein (PRNP) from Theropithecus gelada (Gelada baboon).